The sequence spans 209 residues: Thymidylate kinase (209 aa).

10 to 17 (GLDGAGKS) is a binding site for ATP.

This sequence belongs to the thymidylate kinase family.

It catalyses the reaction dTMP + ATP = dTDP + ADP. Phosphorylation of dTMP to form dTDP in both de novo and salvage pathways of dTTP synthesis. In Francisella tularensis subsp. tularensis (strain FSC 198), this protein is Thymidylate kinase.